Consider the following 312-residue polypeptide: Olfactory receptor 10C1 (312 aa).

Over Met-1–Gly-24 the chain is Extracellular. Residue Asn-4 is glycosylated (N-linked (GlcNAc...) asparagine). A helical transmembrane segment spans residues Leu-25–Val-45. The Cytoplasmic segment spans residues Val-46 to Ala-53. Residues Leu-54 to Ser-74 traverse the membrane as a helical segment. Residues Val-75–Leu-98 lie on the Extracellular side of the membrane. The cysteines at positions 96 and 188 are disulfide-linked. Residues Gln-99–Tyr-119 form a helical membrane-spanning segment. The Cytoplasmic segment spans residues Asp-120–Arg-138. Residues Val-139–Thr-159 form a helical membrane-spanning segment. The Extracellular segment spans residues Pro-160–Leu-196. Residues Gln-197–Ser-216 traverse the membrane as a helical segment. Residues Tyr-217–Ala-236 are Cytoplasmic-facing. A helical membrane pass occupies residues Phe-237–Ile-257. Over Tyr-258–Asp-270 the chain is Extracellular. A helical transmembrane segment spans residues Pro-271 to Leu-291. The Cytoplasmic portion of the chain corresponds to Arg-292–Ile-312.

Belongs to the G-protein coupled receptor 1 family.

The protein localises to the cell membrane. In terms of biological role, odorant receptor. The polypeptide is Olfactory receptor 10C1 (OR10C1) (Homo sapiens (Human)).